A 228-amino-acid polypeptide reads, in one-letter code: Protein 33K (228 aa).

Residues 1 to 156 are disordered; that stretch reads MAPKKKLQLP…GALRLAPNEP (156 aa). Residues 15–53 are compositionally biased toward acidic residues; sequence TDEEEYWDSQAEEVLDEEEEMMEDWDSLDEASEAEEVSD. Low complexity-rich tracts occupy residues 54-63 and 104-119; these read ETPSPSVAFP and AAPT…ATAA. The necessary for nuclear subcellular location stretch occupies residues 171 to 198; that stretch reads YAIFQQSRGQEQELKIKNRSLRSLTRSC. Residues 177–197 are RS-repeat; required for splicing enhancer activity; sequence SRGQEQELKIKNRSLRSLTRS.

The protein belongs to the adenoviridae splicing factor family. Homooligomer. Interacts with DBP; this interaction occurs at a unique vertex during genome packaging. Interacts with IVa2; this interaction occurs at a unique vertex during genome packaging and seems to potentiate IVa2 and 33K oligomerization. Phosphorylated in vitro by human PKA and PRKDC. PRKDC inhibits, whereas PKA activates the splicing factor.

The protein localises to the host nucleus. Promotes alternative splicing of late transcripts by promoting splicing at weak 3' splice sites. Required for the temporal activation of major late pre-mRNA splicing at late times of infection. Induces the splicing and expression of the late capsid vertex protein. Functionally, probably functions as the small terminase that is part of the molecular motor that translocates genomic DNA in empty capsid during DNA packaging. This motor is located at a unique vertex and comprises at least the IVa2 ATPase, the small terminase 33K and probably a portal. Forms a ring-like structure of about 17 nm in which genomic DNA is translocated into the capsid. Stimulates IVa2 ATPase activity in the presence of the viral genome. Once the DNA is packaged, the terminase detaches: the 33K protein is present in the empty particles, but not in the mature virions. Also involved in virion assembly. The polypeptide is Protein 33K (Homo sapiens (Human)).